The chain runs to 324 residues: Methyltransferase pytC (324 aa).

The tract at residues 1–28 (MTVRTAAEPPNRIEVDMDAPSLDTDSSC) is disordered.

Belongs to the methyltransferase superfamily. LaeA methyltransferase family.

The protein operates within secondary metabolite biosynthesis. Functionally, methyltransferase; part of the gene cluster that mediates the biosynthesis of pyranterreones, a family of antioxidative compounds. The first step of pyranonigrins biosynthesis is performed by the hybrid PKS-NRPS synthetase pytA that condenses 4 malonyl-CoA units ato the acetyl starter unit by the modular PKS of pytA. The acyl chain is then connected to an L-serine through the amide bond by the modular NRPS of pytA. A tetramic acid is formed and released from the PKS-NRPS pytA to give pyranterreone 5 with the help of the thioesterase pytI. Pyranterreone 5 could be methylated by pytC to afford pyranterreone 6. Both pyranterreones 5 and 6 are subsequently oxidized by the FAD-linked oxidoreductase pytB and the cytochrome P450 monooxygenase pytD to form the fused gamma-pyrone core, resulting in pyranterreones 7 and 11, respectively. The hydroxy group at C-8 of pyranterreones 7 and 11 are dehydrated by the aspartyl protease pytH to form a delta-7 double bond to give pyranterreones 3 and 1, 2 accordingly. The exo-methylene of pyranterreone 3 could be reduced into a pendant methyl by reductase pytE to provide pyranterreone 4, also known as cordylactam. Pyranterreone 4 can be reconverted to pyranterreone 3 through pytB-catalyzed dehydrogenation or further oxidized to pyranterreones 9 and 10. This chain is Methyltransferase pytC, found in Aspergillus terreus.